The following is a 254-amino-acid chain: Pyruvate aldolase (254 aa).

Catalysis depends on His-48, which acts as the Proton acceptor. 2 residues coordinate a divalent metal cation: Glu-151 and Asp-177.

It belongs to the HpcH/HpaI aldolase family. The cofactor is a divalent metal cation.

It catalyses the reaction D-glyceraldehyde + pyruvate = 2-dehydro-3-deoxy-L-galactonate. In terms of biological role, aldolase which can catalyze in vitro the aldolisation reaction between pyruvate (PA) and D-glyceraldehyde (D-GA) to form 2-dehydro-3-deoxy-L-galactonate. The protein is Pyruvate aldolase of Rhizobium etli (strain ATCC 51251 / DSM 11541 / JCM 21823 / NBRC 15573 / CFN 42).